Here is a 462-residue protein sequence, read N- to C-terminus: Ubiquitin carboxyl-terminal hydrolase calypso (462 aa).

The UCH catalytic domain occupies Gly29–Pro260. Residue Cys115 is the Nucleophile of the active site. Catalysis depends on His197, which acts as the Proton donor. The ULD domain occupies Asn357–Pro385. A positively charged C-terminal tail required for binding nucleosomes region spans residues Lys387–Lys462. Residues Ala394–Lys462 form a disordered region. A compositionally biased stretch (low complexity) spans Asn399 to Thr447. Residues Pro448–Lys462 are compositionally biased toward basic residues.

The protein belongs to the peptidase C12 family. BAP1 subfamily. In terms of assembly, catalytic component of the polycomb repressive deubiquitinase (PR-DUB) complex, at least composed of caly/calypso, Asx and sba (MBD5/6 homolog). The PR-DUB complex associates with nucleosomes to mediate deubiquitination of histone H2AK118ub1 substrates; the association requires the positively charged C-terminal tail of caly, probably due to direct binding of DNA. Interacts (via ULD domain) with Asx (via DEUBAD domain); the interaction produces a stable heterodimer with a composite binding site for ubiquitin. Homodimerizes (via coiled-coil hinge-region between the UCH and ULD domains) to mediate assembly of 2 copies of the caly-Asx heterodimer into a bisymmetric tetramer; dimerization enhances PR-DUB association with nucleosomes.

The protein localises to the nucleus. It catalyses the reaction Thiol-dependent hydrolysis of ester, thioester, amide, peptide and isopeptide bonds formed by the C-terminal Gly of ubiquitin (a 76-residue protein attached to proteins as an intracellular targeting signal).. Catalytic component of the polycomb repressive deubiquitinase (PR-DUB) complex, a complex that specifically mediates deubiquitination of histone H2A monoubiquitinated at 'Lys-119' (H2AK118ub1). Mediates bisymmetric organization of the PR-DUB complex and is involved in association with nucleosomes to mediate deubiquitination. Does not deubiquitinate monoubiquitinated histone H2B. Required to maintain the transcriptionally repressive state of homeotic genes throughout development. The PR-DUB complex has weak or no activity toward 'Lys-48'- and 'Lys-63'-linked polyubiquitin chains. Polycomb group (PcG) protein. The polypeptide is Ubiquitin carboxyl-terminal hydrolase calypso (Drosophila virilis (Fruit fly)).